The chain runs to 357 residues: Glycerol-1-phosphate dehydrogenase [NAD(P)+] (357 aa).

NAD(+)-binding positions include 104–108 (GKTID) and 126–129 (TAAS). D131 provides a ligand contact to substrate. An NAD(+)-binding site is contributed by S135. Residue D178 participates in substrate binding. D178 and H258 together coordinate Zn(2+). H262 contacts substrate. Residue H274 participates in Zn(2+) binding.

This sequence belongs to the glycerol-1-phosphate dehydrogenase family. Requires Zn(2+) as cofactor.

It is found in the cytoplasm. The enzyme catalyses sn-glycerol 1-phosphate + NAD(+) = dihydroxyacetone phosphate + NADH + H(+). It carries out the reaction sn-glycerol 1-phosphate + NADP(+) = dihydroxyacetone phosphate + NADPH + H(+). The protein operates within membrane lipid metabolism; glycerophospholipid metabolism. In terms of biological role, catalyzes the NAD(P)H-dependent reduction of dihydroxyacetonephosphate (DHAP or glycerone phosphate) to glycerol 1-phosphate (G1P). The G1P thus generated is used as the glycerophosphate backbone of phospholipids in the cellular membranes of Archaea. The polypeptide is Glycerol-1-phosphate dehydrogenase [NAD(P)+] (Methanococcoides burtonii (strain DSM 6242 / NBRC 107633 / OCM 468 / ACE-M)).